Reading from the N-terminus, the 302-residue chain is Quinolinate synthase (302 aa).

2 residues coordinate iminosuccinate: His24 and Ser41. Residue Cys86 coordinates [4Fe-4S] cluster. Iminosuccinate contacts are provided by residues 112 to 114 and Ser129; that span reads YVN. Residue Cys171 coordinates [4Fe-4S] cluster. Residues 197–199 and Thr214 contribute to the iminosuccinate site; that span reads HPE. Cys259 is a [4Fe-4S] cluster binding site.

Belongs to the quinolinate synthase family. Type 2 subfamily. [4Fe-4S] cluster is required as a cofactor.

Its subcellular location is the cytoplasm. It catalyses the reaction iminosuccinate + dihydroxyacetone phosphate = quinolinate + phosphate + 2 H2O + H(+). Its pathway is cofactor biosynthesis; NAD(+) biosynthesis; quinolinate from iminoaspartate: step 1/1. In terms of biological role, catalyzes the condensation of iminoaspartate with dihydroxyacetone phosphate to form quinolinate. The protein is Quinolinate synthase of Dehalococcoides mccartyi (strain ATCC BAA-2266 / KCTC 15142 / 195) (Dehalococcoides ethenogenes (strain 195)).